The chain runs to 476 residues: MKILHVCSELYPLLKTGGLADVLGALPQAQNQIGLDARVLLPAYPAITAGIQNTQVVAEFDNFAGHVVLRYGEYNDVGIYLIDAPHLYGREGNPYHDAYYNDYGDNYKRFALLGWVGAELATGLDNWWRAEVVHAHDWHAGLCAAYLFNKGKPAKSVFTIHNLAYQGQFSYHHLYEIGLPTGMFHVEGLELFGQISYLKSGLFYSDASTAVSPTYAQEITTPEFAYGLQGLLSGLKAQGRLVGILNGVDENIWHPNVDQYIPHHYKLKYMAGKKKNKAELQAYFNLPQDESALAFVMVTRLTEQKGVDLLIESADEIVKQGGQLMILGSGAPHLEQGIRELAAQYPENIAVKIGYDEALSHLMVAGGDVILVPSRFEPCGLTQLYGLQYGTLPLVRKTGGLADTVVDSASESIKARTATGFVFENATPEALRHCLQRAFALWQKPRAWTMVRTDAMEQDFSWRKAAEQYRTLYERL.

K15 contributes to the ADP-alpha-D-glucose binding site.

The protein belongs to the glycosyltransferase 1 family. Bacterial/plant glycogen synthase subfamily.

The enzyme catalyses [(1-&gt;4)-alpha-D-glucosyl](n) + ADP-alpha-D-glucose = [(1-&gt;4)-alpha-D-glucosyl](n+1) + ADP + H(+). Its pathway is glycan biosynthesis; glycogen biosynthesis. Its function is as follows. Synthesizes alpha-1,4-glucan chains using ADP-glucose. The protein is Glycogen synthase of Haemophilus influenzae (strain PittEE).